We begin with the raw amino-acid sequence, 207 residues long: Ribonuclease HII (207 aa).

An RNase H type-2 domain is found at 12–201 (DLVAGVDEVG…VRAAWEVREG (190 aa)). A divalent metal cation contacts are provided by Asp18, Glu19, and Asp110.

It belongs to the RNase HII family. Requires Mn(2+) as cofactor. Mg(2+) is required as a cofactor.

It localises to the cytoplasm. The catalysed reaction is Endonucleolytic cleavage to 5'-phosphomonoester.. Functionally, endonuclease that specifically degrades the RNA of RNA-DNA hybrids. The sequence is that of Ribonuclease HII from Pseudomonas putida (strain ATCC 700007 / DSM 6899 / JCM 31910 / BCRC 17059 / LMG 24140 / F1).